We begin with the raw amino-acid sequence, 325 residues long: Aldo-keto reductase family 1 member D1 (325 aa).

NADP(+) contacts are provided by residues 22 to 26 (GLGTY) and Asp52. Tyr26 contributes to the substrate binding site. Substrate-binding residues include Tyr57, Trp88, Glu119, and Tyr131. The active-site Proton donor is Tyr57. NADP(+)-binding positions include 168-169 (SN), Gln192, and 218-223 (HSPLGT). Ser228 bears the Phosphoserine mark. Trp229 lines the substrate pocket. 272-282 (KSFTPERIKEN) lines the NADP(+) pocket.

It belongs to the aldo/keto reductase family.

The protein localises to the cytoplasm. It catalyses the reaction 5beta-cholestan-3-one + NADP(+) = cholest-4-en-3-one + NADPH + H(+). The enzyme catalyses 4,5beta-dihydrocortisone + NADP(+) = cortisone + NADPH + H(+). It carries out the reaction cortisol + NADPH + H(+) = 5beta-dihydrocortisol + NADP(+). The catalysed reaction is corticosterone + NADPH + H(+) = 5beta-dihydrocorticosterone + NADP(+). It catalyses the reaction 7alpha,12alpha-dihydroxycholest-4-en-3-one + NADPH + H(+) = 7alpha,12alpha-dihydroxy-5beta-cholestan-3-one + NADP(+). The enzyme catalyses 7alpha-hydroxycholest-4-en-3-one + NADPH + H(+) = 7alpha-hydroxy-5beta-cholestan-3-one + NADP(+). It carries out the reaction epitestosterone + NADPH + H(+) = 5beta-dihydroepitestosterone + NADP(+). The catalysed reaction is androst-4-ene-3,17-dione + NADPH + H(+) = 5beta-androstane-3,17-dione + NADP(+). It catalyses the reaction progesterone + NADPH + H(+) = 5beta-pregnan-3,20-dione + NADP(+). The enzyme catalyses 21-hydroxyprogesterone + NADPH + H(+) = 5beta-dihydrodeoxycorticosterone + NADP(+). It carries out the reaction aldosterone + NADPH + H(+) = 5beta-dihydroaldosterone + NADP(+). The catalysed reaction is 17beta-hydroxyandrosta-1,4-dien-3-one + NADPH + H(+) = 17beta-hydroxy-5beta-androst-1-en-3-one + NADP(+). It catalyses the reaction 17beta-hydroxyestr-4-en-3-one + NADPH + H(+) = 17beta-hydroxy-5beta-estran-3-one + NADP(+). The enzyme catalyses 5beta-dihydrotestosterone + NADP(+) = testosterone + NADPH + H(+). It carries out the reaction androst-4-ene-3,11,17-trione + NADPH + H(+) = 17beta-hydroxyandrost-4-ene-3,11-dione + NADP(+). With respect to regulation, subject to inhibition by high substrate concentrations. Inhibited by testosterone concentrations above 10 uM. Inhibited by the primary and secondary bile acids chenodeoxycholic acid and ursodeoxycholic acid. In terms of biological role, catalyzes the stereospecific NADPH-dependent reduction of the C4-C5 double bond of bile acid intermediates and steroid hormones carrying a delta(4)-3-one structure to yield an A/B cis-ring junction. This cis-configuration is crucial for bile acid biosynthesis and plays important roles in steroid metabolism. Capable of reducing a broad range of delta-(4)-3-ketosteroids from C18 (such as, 17beta-hydroxyestr-4-en-3-one) to C27 (such as, 7alpha-hydroxycholest-4-en-3-one). This Mus musculus (Mouse) protein is Aldo-keto reductase family 1 member D1 (Akr1d1).